The following is a 195-amino-acid chain: Thymidylate kinase (195 aa).

ATP is bound at residue 7–14 (GIDGSGKT).

This sequence belongs to the thymidylate kinase family.

The catalysed reaction is dTMP + ATP = dTDP + ADP. Phosphorylation of dTMP to form dTDP in both de novo and salvage pathways of dTTP synthesis. The chain is Thymidylate kinase (tmk) from Aquifex aeolicus (strain VF5).